We begin with the raw amino-acid sequence, 203 residues long: LexA repressor (203 aa).

Positions 28 to 48 (RAEIASQLGFRSPNAAEEHLK) form a DNA-binding region, H-T-H motif. Active-site for autocatalytic cleavage activity residues include S120 and K157.

It belongs to the peptidase S24 family. As to quaternary structure, homodimer.

It carries out the reaction Hydrolysis of Ala-|-Gly bond in repressor LexA.. In terms of biological role, represses a number of genes involved in the response to DNA damage (SOS response), including recA and lexA. Binds to the 16 bp palindromic sequence 5'-CTGTATATATATACAG-3'. In the presence of single-stranded DNA, RecA interacts with LexA causing an autocatalytic cleavage which disrupts the DNA-binding part of LexA, leading to derepression of the SOS regulon and eventually DNA repair. In Proteus mirabilis (strain HI4320), this protein is LexA repressor.